The following is a 211-amino-acid chain: Probable GTP-binding protein EngB (211 aa).

Residues Glu30–Leu204 enclose the EngB-type G domain. GTP contacts are provided by residues Gly38–Ser45, Gly64–Leu68, Asp82–Gly85, Thr149–Asp152, and Leu182–Ala185. 2 residues coordinate Mg(2+): Ser45 and Thr66.

This sequence belongs to the TRAFAC class TrmE-Era-EngA-EngB-Septin-like GTPase superfamily. EngB GTPase family. Requires Mg(2+) as cofactor.

Functionally, necessary for normal cell division and for the maintenance of normal septation. The protein is Probable GTP-binding protein EngB of Pseudomonas savastanoi pv. phaseolicola (strain 1448A / Race 6) (Pseudomonas syringae pv. phaseolicola (strain 1448A / Race 6)).